The chain runs to 46 residues: Putative gene 54 protein (46 aa).

The polypeptide is Putative gene 54 protein (54) (Bacillus phage SP01 (Bacteriophage SP01)).